The primary structure comprises 562 residues: Protoporphyrinogen oxidase 1, chloroplastic (562 aa).

A chloroplast-targeting transit peptide spans 1 to 48 (MSAMALSSTMALSLPQSSMSLSHCRHNRITILIPSSSLRRRGGSSIRC). FAD is bound by residues 88–93 (GGGISG), 115–116 (EA), and 137–140 (GPNS). Positions 274–302 (TLKTIQERKDNPKPPRDPRLPKPKGQTVG) are disordered. The span at 278–293 (IQERKDNPKPPRDPRL) shows a compositional bias: basic and acidic residues. FAD contacts are provided by residues Val323 and 536-538 (VAL).

It belongs to the protoporphyrinogen/coproporphyrinogen oxidase family. Protoporphyrinogen oxidase subfamily. The cofactor is FAD.

It localises to the plastid. The protein localises to the chloroplast thylakoid membrane. It is found in the chloroplast inner membrane. It catalyses the reaction protoporphyrinogen IX + 3 O2 = protoporphyrin IX + 3 H2O2. Its pathway is porphyrin-containing compound metabolism; protoporphyrin-IX biosynthesis; protoporphyrin-IX from protoporphyrinogen-IX: step 1/1. It functions in the pathway porphyrin-containing compound metabolism; chlorophyll biosynthesis. Functionally, catalyzes the 6-electron oxidation of protoporphyrinogen-IX to form protoporphyrin-IX. The polypeptide is Protoporphyrinogen oxidase 1, chloroplastic (Spinacia oleracea (Spinach)).